The chain runs to 573 residues: Dilute domain-containing protein SPAC25B8.08 (573 aa).

The 285-residue stretch at 180-464 (NAFLCEVNQV…LKKLDAFHEE (285 aa)) folds into the Dilute domain.

The protein resides in the cytoplasm. It is found in the golgi apparatus. This Schizosaccharomyces pombe (strain 972 / ATCC 24843) (Fission yeast) protein is Dilute domain-containing protein SPAC25B8.08.